Reading from the N-terminus, the 921-residue chain is Protein translocase subunit SecA (921 aa).

ATP-binding positions include Gln87, 105–109 (GEGKT), and Asp501. The disordered stretch occupies residues 831–886 (PFPVINTETSGPSEEPAGLFSQGTTGGDIPAPQPMAGFPSAAPMPPRPQPVPTGAE). Residues 872–881 (APMPPRPQPV) show a composition bias toward pro residues. Zn(2+) contacts are provided by Cys905, Cys907, Cys916, and His917.

It belongs to the SecA family. Monomer and homodimer. Part of the essential Sec protein translocation apparatus which comprises SecA, SecYEG and auxiliary proteins SecDF-YajC and YidC. Requires Zn(2+) as cofactor.

It localises to the cell inner membrane. Its subcellular location is the cytoplasm. The enzyme catalyses ATP + H2O + cellular proteinSide 1 = ADP + phosphate + cellular proteinSide 2.. Part of the Sec protein translocase complex. Interacts with the SecYEG preprotein conducting channel. Has a central role in coupling the hydrolysis of ATP to the transfer of proteins into and across the cell membrane, serving both as a receptor for the preprotein-SecB complex and as an ATP-driven molecular motor driving the stepwise translocation of polypeptide chains across the membrane. This Gluconobacter oxydans (strain 621H) (Gluconobacter suboxydans) protein is Protein translocase subunit SecA.